The sequence spans 140 residues: Nucleoside diphosphate kinase (140 aa).

ATP contacts are provided by Lys11, Phe59, Arg87, Thr93, Arg104, and Asn114. Residue His117 is the Pros-phosphohistidine intermediate of the active site.

It belongs to the NDK family. Homotetramer. Mg(2+) is required as a cofactor.

Its subcellular location is the cytoplasm. It catalyses the reaction a 2'-deoxyribonucleoside 5'-diphosphate + ATP = a 2'-deoxyribonucleoside 5'-triphosphate + ADP. The catalysed reaction is a ribonucleoside 5'-diphosphate + ATP = a ribonucleoside 5'-triphosphate + ADP. Major role in the synthesis of nucleoside triphosphates other than ATP. The ATP gamma phosphate is transferred to the NDP beta phosphate via a ping-pong mechanism, using a phosphorylated active-site intermediate. The chain is Nucleoside diphosphate kinase from Bradyrhizobium diazoefficiens (strain JCM 10833 / BCRC 13528 / IAM 13628 / NBRC 14792 / USDA 110).